The primary structure comprises 341 residues: Inositol 2-dehydrogenase (341 aa).

Belongs to the Gfo/Idh/MocA family. In terms of assembly, homotetramer.

It carries out the reaction myo-inositol + NAD(+) = scyllo-inosose + NADH + H(+). In terms of biological role, involved in the oxidation of myo-inositol (MI) to 2-keto-myo-inositol (2KMI or 2-inosose). In Acidothermus cellulolyticus (strain ATCC 43068 / DSM 8971 / 11B), this protein is Inositol 2-dehydrogenase.